The following is a 162-amino-acid chain: Lipoprotein signal peptidase (162 aa).

3 helical membrane-spanning segments follow: residues 12–32, 70–90, and 102–122; these read WLWLVVVVLIIDLGSKYLILQ, WFFAGIAIGICVILMVMMYRS, and ALIIGGALGNLFDRLWHGFVV. Residues D123 and D141 contribute to the active site. The chain crosses the membrane as a helical span at residues 137 to 157; the sequence is FNLADSAICIGAALIVLEGFL.

The protein belongs to the peptidase A8 family.

The protein resides in the cell inner membrane. The enzyme catalyses Release of signal peptides from bacterial membrane prolipoproteins. Hydrolyzes -Xaa-Yaa-Zaa-|-(S,diacylglyceryl)Cys-, in which Xaa is hydrophobic (preferably Leu), and Yaa (Ala or Ser) and Zaa (Gly or Ala) have small, neutral side chains.. The protein operates within protein modification; lipoprotein biosynthesis (signal peptide cleavage). In terms of biological role, this protein specifically catalyzes the removal of signal peptides from prolipoproteins. This chain is Lipoprotein signal peptidase, found in Citrobacter koseri (strain ATCC BAA-895 / CDC 4225-83 / SGSC4696).